We begin with the raw amino-acid sequence, 95 residues long: Aspartyl/glutamyl-tRNA(Asn/Gln) amidotransferase subunit C (95 aa).

It belongs to the GatC family. In terms of assembly, heterotrimer of A, B and C subunits.

It carries out the reaction L-glutamyl-tRNA(Gln) + L-glutamine + ATP + H2O = L-glutaminyl-tRNA(Gln) + L-glutamate + ADP + phosphate + H(+). The catalysed reaction is L-aspartyl-tRNA(Asn) + L-glutamine + ATP + H2O = L-asparaginyl-tRNA(Asn) + L-glutamate + ADP + phosphate + 2 H(+). Its function is as follows. Allows the formation of correctly charged Asn-tRNA(Asn) or Gln-tRNA(Gln) through the transamidation of misacylated Asp-tRNA(Asn) or Glu-tRNA(Gln) in organisms which lack either or both of asparaginyl-tRNA or glutaminyl-tRNA synthetases. The reaction takes place in the presence of glutamine and ATP through an activated phospho-Asp-tRNA(Asn) or phospho-Glu-tRNA(Gln). The sequence is that of Aspartyl/glutamyl-tRNA(Asn/Gln) amidotransferase subunit C from Chromobacterium violaceum (strain ATCC 12472 / DSM 30191 / JCM 1249 / CCUG 213 / NBRC 12614 / NCIMB 9131 / NCTC 9757 / MK).